The chain runs to 575 residues: 5-aminolevulinate synthase, mitochondrial (575 aa).

Residues methionine 1 to tyrosine 55 constitute a mitochondrion transit peptide. The substrate site is built by arginine 124, serine 237, and lysine 256. Pyridoxal 5'-phosphate is bound by residues serine 289, histidine 317, and threonine 361. Lysine 364 is an active-site residue. Residue lysine 364 is modified to N6-(pyridoxal phosphate)lysine. Positions 393 and 394 each coordinate pyridoxal 5'-phosphate. Threonine 479 is a binding site for substrate.

This sequence belongs to the class-II pyridoxal-phosphate-dependent aminotransferase family. As to quaternary structure, homodimer. The cofactor is pyridoxal 5'-phosphate.

It localises to the mitochondrion matrix. The catalysed reaction is succinyl-CoA + glycine + H(+) = 5-aminolevulinate + CO2 + CoA. It functions in the pathway porphyrin-containing compound metabolism; protoporphyrin-IX biosynthesis; 5-aminolevulinate from glycine: step 1/1. Its function is as follows. Catalyzes the synthesis of 5-aminolevulinate (ALA) from succinyl-CoA and glycine, the first and rate-limiting step in heme biosynthesis. This chain is 5-aminolevulinate synthase, mitochondrial (HEM1), found in Debaryomyces hansenii (strain ATCC 36239 / CBS 767 / BCRC 21394 / JCM 1990 / NBRC 0083 / IGC 2968) (Yeast).